The sequence spans 361 residues: Ataxin-3 (361 aa).

A Peptide (Met-Gly) (interchain with G-Cter in ubiquitin) cross-link involves residue M1. Positions M1–M180 constitute a Josephin domain. C14 serves as the catalytic Nucleophile. The Proton acceptor role is filled by H119. N134 is a catalytic residue. K200 is covalently cross-linked (Glycyl lysine isopeptide (Lys-Gly) (interchain with G-Cter in ubiquitin)). S219 is modified (phosphoserine). 2 consecutive UIM domains span residues E224–E243 and D244–N263. A compositionally biased stretch (polar residues) spans Q258–S278. The segment at Q258–D338 is disordered. 2 positions are modified to phosphoserine: S265 and S272. Positions E279–Q293 are enriched in basic and acidic residues. A compositionally biased stretch (low complexity) spans Q294–Q305. The span at G306–A325 shows a compositional bias: polar residues. A Phosphoserine modification is found at S328. The UIM 3 domain maps to G331 to E349.

In terms of assembly, interacts with STUB1/CHIP (when monoubiquitinated). Interacts with DNA repair proteins RAD23A and RAD23B. Interacts with BECN1 (via its poly-Gln domain). Interacts with PRKN, UBR2, VCP and tubulin. Short isoform 1 interacts with CASP7. Monoubiquitinated N-terminally by UBE2W, possibly leading to activate the deubiquitinating enzyme activity. In terms of tissue distribution, ubiquitous.

It is found in the nucleus matrix. Its subcellular location is the nucleus. The protein localises to the lysosome membrane. The catalysed reaction is Thiol-dependent hydrolysis of ester, thioester, amide, peptide and isopeptide bonds formed by the C-terminal Gly of ubiquitin (a 76-residue protein attached to proteins as an intracellular targeting signal).. Deubiquitinating enzyme involved in protein homeostasis maintenance, transcription, cytoskeleton regulation, myogenesis and degradation of misfolded chaperone substrates. Binds long polyubiquitin chains and trims them, while it has weak or no activity against chains of 4 or less ubiquitins. Involved in degradation of misfolded chaperone substrates via its interaction with STUB1/CHIP: recruited to monoubiquitinated STUB1/CHIP, and restricts the length of ubiquitin chain attached to STUB1/CHIP substrates and preventing further chain extension. Interacts with key regulators of transcription and represses transcription: acts as a histone-binding protein that regulates transcription. Acts as a negative regulator of mTORC1 signaling in response to amino acid deprivation by mediating deubiquitination of RHEB, thereby promoting RHEB inactivation by the TSC-TBC complex. Regulates autophagy via the deubiquitination of 'Lys-402' of BECN1 leading to the stabilization of BECN1. The polypeptide is Ataxin-3 (Homo sapiens (Human)).